Reading from the N-terminus, the 444-residue chain is MNPREFISNLPDEILGKILSLLPTKLGVSTSVLSKRWRNLILLVDNFDLEDSSTSGFSAFLEQTVARLNTCPIKRLSLNGRHYRFSSADSWISTAFERGCLELHLQSQYLDTGILSSNTLVKLTLSDQIYLQGLVPHDGTVFFPALKTLSLGAVVADRDVYESLISGCPVLDELSIRDGCDDPPTWKKSVVNKSVKRLTVSFHHPMSAWAYEDNVWFKTQSLVFLDYSAFVSQGYTIVDRMDSLVEARLDLRLWVSTDSYDSDYEDKDFDVYRPYDVFGDVTSLVSGIRKVKTLHLSPDSLEAFFFCCNHMPVFNNLRNLSLESDEEKGWQALPLLLNNSLNLHTLSIKGLVHRVTSRCGDACACISERKTGMCCLSACRIKVLEITGYGGSFIELKQMRHFLGKLQCLETVRIGVERDGNNEHLRANLSSLHRASSECNIQFI.

Residues 4–50 form the F-box domain; sequence REFISNLPDEILGKILSLLPTKLGVSTSVLSKRWRNLILLVDNFDLE.

The sequence is that of Putative F-box protein At1g64540 from Arabidopsis thaliana (Mouse-ear cress).